The sequence spans 688 residues: Homoaconitase, mitochondrial (688 aa).

A mitochondrion-targeting transit peptide spans 1-19 (MALLYLSTRSSLKKTGARC). The [4Fe-4S] cluster site is built by Cys-346, Cys-406, and Cys-409.

The protein belongs to the aconitase/IPM isomerase family. [4Fe-4S] cluster serves as cofactor.

It localises to the mitochondrion. It carries out the reaction (2R,3S)-homoisocitrate = cis-homoaconitate + H2O. Its pathway is amino-acid biosynthesis; L-lysine biosynthesis via AAA pathway; L-alpha-aminoadipate from 2-oxoglutarate: step 3/5. Functionally, catalyzes the reversible hydration of cis-homoaconitate to (2R,3S)-homoisocitrate, a step in the alpha-aminoadipate pathway for lysine biosynthesis. The protein is Homoaconitase, mitochondrial (LYS4) of Debaryomyces hansenii (strain ATCC 36239 / CBS 767 / BCRC 21394 / JCM 1990 / NBRC 0083 / IGC 2968) (Yeast).